We begin with the raw amino-acid sequence, 298 residues long: Bifunctional methyltransferase/endonuclease (298 aa).

Residues 1–79 (MQSIDLYSYL…SLGIDEKIRR (79 aa)) are probable methylated-DNA--protein-cysteine methyltransferase. Cys-56 is an active-site residue. The interval 80–298 (LRNDGIEINN…TVALRRNNII (219 aa)) is endonuclease V. Mg(2+) contacts are provided by Asp-137 and Asp-197.

The protein in the N-terminal section; belongs to the MGMT family. It in the C-terminal section; belongs to the endonuclease V family. The cofactor is Mg(2+).

It localises to the cytoplasm. It carries out the reaction Endonucleolytic cleavage at apurinic or apyrimidinic sites to products with a 5'-phosphate.. In terms of biological role, DNA repair enzyme involved in the repair of deaminated bases. Selectively cleaves double-stranded DNA at the second phosphodiester bond 3' to a deoxyinosine leaving behind the intact lesion on the nicked DNA. The sequence is that of Bifunctional methyltransferase/endonuclease from Picrophilus torridus (strain ATCC 700027 / DSM 9790 / JCM 10055 / NBRC 100828 / KAW 2/3).